Reading from the N-terminus, the 365-residue chain is Putative glutamate--cysteine ligase 2-2 (365 aa).

This sequence belongs to the glutamate--cysteine ligase type 2 family. YbdK subfamily.

The enzyme catalyses L-cysteine + L-glutamate + ATP = gamma-L-glutamyl-L-cysteine + ADP + phosphate + H(+). Its function is as follows. ATP-dependent carboxylate-amine ligase which exhibits weak glutamate--cysteine ligase activity. The chain is Putative glutamate--cysteine ligase 2-2 from Mycolicibacterium vanbaalenii (strain DSM 7251 / JCM 13017 / BCRC 16820 / KCTC 9966 / NRRL B-24157 / PYR-1) (Mycobacterium vanbaalenii).